Consider the following 238-residue polypeptide: Ribosomal RNA small subunit methyltransferase G (238 aa).

Residues glycine 77, phenylalanine 82, 128 to 129, and arginine 147 each bind S-adenosyl-L-methionine; that span reads AE.

It belongs to the methyltransferase superfamily. RNA methyltransferase RsmG family.

The protein localises to the cytoplasm. Its function is as follows. Specifically methylates the N7 position of guanine in position 535 of 16S rRNA. This chain is Ribosomal RNA small subunit methyltransferase G, found in Exiguobacterium sibiricum (strain DSM 17290 / CCUG 55495 / CIP 109462 / JCM 13490 / 255-15).